The primary structure comprises 145 residues: MAKNILLLNGPNLNLLGSREPEVYGATTLADVERAASEQVAQAGAKLTTFQSNHEGALIDRIQAAKKEGIDAIVINPGGLTHTSVSLRDALAAVAIPFVEIHVSNIHQREAFRHHSYLSGIAVGVICGLGTEGYAAAISFALKKL.

Residue Y24 is the Proton acceptor of the active site. Substrate is bound by residues N76, H82, and D89. Residue H102 is the Proton donor of the active site. Substrate-binding positions include 103–104 and R113; that span reads VS.

The protein belongs to the type-II 3-dehydroquinase family. In terms of assembly, homododecamer.

The catalysed reaction is 3-dehydroquinate = 3-dehydroshikimate + H2O. It participates in metabolic intermediate biosynthesis; chorismate biosynthesis; chorismate from D-erythrose 4-phosphate and phosphoenolpyruvate: step 3/7. In terms of biological role, catalyzes a trans-dehydration via an enolate intermediate. The polypeptide is 3-dehydroquinate dehydratase (Janthinobacterium sp. (strain Marseille) (Minibacterium massiliensis)).